The following is a 377-amino-acid chain: Putative glutamate--cysteine ligase 2 (377 aa).

Belongs to the glutamate--cysteine ligase type 2 family. YbdK subfamily.

The enzyme catalyses L-cysteine + L-glutamate + ATP = gamma-L-glutamyl-L-cysteine + ADP + phosphate + H(+). Its function is as follows. ATP-dependent carboxylate-amine ligase which exhibits weak glutamate--cysteine ligase activity. The protein is Putative glutamate--cysteine ligase 2 of Ralstonia pickettii (strain 12J).